A 464-amino-acid chain; its full sequence is ERO1-like protein alpha (464 aa).

The first 23 residues, M1–G23, serve as a signal peptide directing secretion. 8 disulfides stabilise this stretch: C35–C48, C37–C46, C85–C387, C94–C99, C94–C130, C99–C104, C207–C237, and C390–C393. Phosphoserine is present on residues S106, S142, and S144. FAD contacts are provided by R186, T188, and W199. Residues S248 and H251 each coordinate FAD. N276 carries an N-linked (GlcNAc...) asparagine glycan. Residues R283 and R296 each coordinate FAD. N-linked (GlcNAc...) asparagine glycosylation occurs at N380.

The protein belongs to the EROs family. As to quaternary structure, predominantly monomer. May function both as a monomer and a homodimer. Interacts with PDILT. Interacts with ERP44; the interaction results in retention of ERO1A in the endoplasmic reticulum. It depends on FAD as a cofactor. Post-translationally, N-glycosylated. The Cys-94/Cys-99 and Cys-390/Cys-393 disulfide bonds constitute the redox-active center. The Cys-94/Cys-99 disulfide bond may accept electron from P4HB and funnel them to the active site disulfide Cys-390/Cys-393. The regulatory Cys-99/Cys-104 disulfide bond stabilizes the other regulatory bond Cys-94/Cys-130. In terms of processing, phosphorylated on Ser-144 by FAM20C in the Golgi which increases its enzymatic activity. Phosphorylation is induced by lactation. It is also induced by hypoxia and reductive stress.

The protein localises to the endoplasmic reticulum membrane. It is found in the golgi apparatus lumen. The protein resides in the secreted. Its subcellular location is the cell projection. It localises to the dendrite. Its activity is regulated as follows. Enzyme activity is tightly regulated to prevent the accumulation of reactive oxygen species in the endoplasmic reticulum. Reversibly down-regulated by the formation of disulfide bonds between the active site Cys-94 and Cys-130, and between Cys-99 and Cys-104. Glutathione may be required to regulate its activity in the endoplasmic reticulum. In terms of biological role, oxidoreductase involved in disulfide bond formation in the endoplasmic reticulum. Efficiently reoxidizes P4HB/PDI, the enzyme catalyzing protein disulfide formation, in order to allow P4HB to sustain additional rounds of disulfide formation. Following P4HB reoxidation, passes its electrons to molecular oxygen via FAD, leading to the production of reactive oxygen species (ROS) in the cell. Required for the proper folding of immunoglobulins. Plays an important role in ER stress-induced, CHOP-dependent apoptosis by activating the inositol 1,4,5-trisphosphate receptor IP3R1. This chain is ERO1-like protein alpha, found in Rattus norvegicus (Rat).